We begin with the raw amino-acid sequence, 410 residues long: FAS1 domain-containing protein CaO19.3004 (410 aa).

An N-terminal signal peptide occupies residues 1–18 (MKLSKLLQLAVFSSLVTS). Composition is skewed to basic and acidic residues over residues 64–73 (NAKFKRDPKN) and 83–96 (GSAEEEQKDKREPK). Residues 64–98 (NAKFKRDPKNVIDPASLKEGSAEEEQKDKREPKNL) are disordered. Positions 247–407 (NNLLQSILPQ…GFVLIINDSL (161 aa)) constitute an FAS1 domain.

It is found in the vacuole. The chain is FAS1 domain-containing protein CaO19.3004 from Candida albicans (strain SC5314 / ATCC MYA-2876) (Yeast).